Consider the following 2543-residue polypeptide: Zinc finger FYVE domain-containing protein 26 (2543 aa).

The residue at position 297 (Ser297) is a Phosphoserine. Disordered regions lie at residues 523–545 (ECRDSPSEDPALAAEPANDSLSS), 609–636 (GLLGLRSPSESPQHIAQPERKSEQGCQE), 699–722 (LSSHSPPEKPKLPEGQSCSGSRDG), and 744–820 (VTSN…GRLQ). Ser615, Ser619, and Ser703 each carry phosphoserine. Residues 699 to 710 (LSSHSPPEKPKL) are compositionally biased toward basic and acidic residues. Residues 767–776 (SLRRGRRTRR) show a composition bias toward basic residues. Residues 786–806 (SNPSLESTSSELSTSTSEGSL) show a composition bias toward low complexity. At Ser802 the chain carries Phosphoserine. A coiled-coil region spans residues 870-897 (MFMERYQEVIQELSRVEHKIENQNSDGG). The tract at residues 1272–1299 (LSTLSSPKPTGNSTLERKPHSSPRDSSL) is disordered. Residues 1273–1285 (STLSSPKPTGNST) show a composition bias toward polar residues. Phosphoserine occurs at positions 1744, 1765, 1784, and 1786. A disordered region spans residues 1780–1812 (STIHSPSPRERSFPESQPPPEFVPPATPPGRPQ). Residues 1795–1810 (SQPPPEFVPPATPPGR) show a composition bias toward pro residues. An FYVE-type zinc finger spans residues 1816–1876 (DESASICMVC…VCDQCYSYYN (61 aa)). Residues Cys1822, Cys1825, Cys1839, Cys1842, Cys1847, Cys1850, Cys1868, and Cys1871 each contribute to the Zn(2+) site.

This sequence belongs to the ZFYVE26 family. Interacts with AP5Z1, AP5B1, AP5S1 and SPG11. Interacts with TTC19 and KIF13A.

Its subcellular location is the cytoplasm. It is found in the cytoskeleton. The protein resides in the microtubule organizing center. The protein localises to the centrosome. It localises to the midbody. In terms of biological role, phosphatidylinositol 3-phosphate-binding protein required for the abscission step in cytokinesis: recruited to the midbody during cytokinesis and acts as a regulator of abscission. May also be required for efficient homologous recombination DNA double-strand break repair. In Ailuropoda melanoleuca (Giant panda), this protein is Zinc finger FYVE domain-containing protein 26 (ZFYVE26).